A 1093-amino-acid chain; its full sequence is MGWFNGPPSWAEMERVLDSKPRRAGESAAPEPDGPLSRGRATYRPPDEGRAARSSVPYAELHAHSAFSFLDGASTPEEMVEEAARLDLRALALTDHDGLYGAVRFAEAAAELDVRTVFGAELSLGPSARTEAPDPPGPHLLVLARGPEGYRRLSRQLAAAHLAGGEKGKPRYDLDALTEAAGGHWHILTGCRKGHVRQALSDGGPDAAARALADLVDRFGAARVSIELTRHGQPLDDERNAALAALAPRFGVGVVATTGAHFAGPSRRRLAMAMGAIRARESLDSAAGWLAPLGGSHLRSGAEMARLFAWRPQAVTAAAELGEQCAFGLALIAPRLPPFDVPDGHTEDSWLRQLTMTGARDRYGSPEHAPRAYAQIEHELKVIAQLQFPGYFLVVHDIARFCRENNILCQGRGSAANSAVCYALGVTAVDPVANELLFERFLSPARDGPPDIDMDIESDQREKVIQYVYDRYGRDYAAQVANVITYRGKIAVRDMARALGYSQGQQDAWSKQISSWSGPADSPDVEGIPPQVIDLANQVRNLPRHLGIHSGGMVICDRPIADVCPVEWARMENRSVLQWDKDDCAAIGLVKFDLLGLGMLSALHYAIDLVAEHKGIEVDLARLDLSEPAVYEMLARADSVGVFQVESRAQMATLPRLKPRVFYDLVVEVALIRPGPIQGGSVHPYIRRRNGVDPVLYDHPSMEPALRKTLGVPLFQEQLMQLAVDCAGFSAAEADQLRRAMGSKRSTERMRRLRSRFYDGMRALHGAPDEVIDRTYEKLEAFANFGFPESHALSFASLVFYSSWFKLHHPAAFCAALLRAQPMGFYSPQSLVADARRHGVTVHGPDVNASLAHATLENAGTEVRLGLGAVRHIGDDLAEKLVQERKANGPFTSLLDLTARLQLSVQQTEALATAGAFGCFGMSRREALWAAGAAATQRPDRLPGVGSSSHIPALPGMSELELAAADVWATGISPDSYPTQFLRDDLDAMGVVPAARLGSVPDGDRVLIAGAVTHRQRPGTAQGVTFLNLEDETGMVNVLCTPGVWARHRKLANTAPALLVRGQVQNASGAITVVAERLGRITLAVGSRSRDFR.

Residues M1 to S55 are disordered. Basic and acidic residues predominate over residues E12 to G25.

The protein belongs to the DNA polymerase type-C family. DnaE2 subfamily.

The protein localises to the cytoplasm. It carries out the reaction DNA(n) + a 2'-deoxyribonucleoside 5'-triphosphate = DNA(n+1) + diphosphate. DNA polymerase involved in damage-induced mutagenesis and translesion synthesis (TLS). It is not the major replicative DNA polymerase. This is Error-prone DNA polymerase from Mycolicibacterium paratuberculosis (strain ATCC BAA-968 / K-10) (Mycobacterium paratuberculosis).